Here is a 288-residue protein sequence, read N- to C-terminus: Proteasome subunit beta (288 aa).

Positions 1-57 (MTAGDPMRLHPGHALSSFTEHLRALAPELLGPNRFAALDGATGSSGGTGAKDIAPHG) are cleaved as a propeptide — removed in mature form; by autocatalysis. The active-site Nucleophile is Thr58.

This sequence belongs to the peptidase T1B family. As to quaternary structure, the 20S proteasome core is composed of 14 alpha and 14 beta subunits that assemble into four stacked heptameric rings, resulting in a barrel-shaped structure. The two inner rings, each composed of seven catalytic beta subunits, are sandwiched by two outer rings, each composed of seven alpha subunits. The catalytic chamber with the active sites is on the inside of the barrel. Has a gated structure, the ends of the cylinder being occluded by the N-termini of the alpha-subunits. Is capped by the proteasome-associated ATPase, ARC.

Its subcellular location is the cytoplasm. It catalyses the reaction Cleavage of peptide bonds with very broad specificity.. It participates in protein degradation; proteasomal Pup-dependent pathway. The formation of the proteasomal ATPase ARC-20S proteasome complex, likely via the docking of the C-termini of ARC into the intersubunit pockets in the alpha-rings, may trigger opening of the gate for substrate entry. Interconversion between the open-gate and close-gate conformations leads to a dynamic regulation of the 20S proteasome proteolysis activity. In terms of biological role, component of the proteasome core, a large protease complex with broad specificity involved in protein degradation. This is Proteasome subunit beta from Nocardia farcinica (strain IFM 10152).